We begin with the raw amino-acid sequence, 339 residues long: Serpentine receptor class delta-32 (339 aa).

A run of 7 helical transmembrane segments spans residues 14–34, 45–65, 94–114, 128–148, 188–208, 237–257, and 269–289; these read AAVVSTLGIIFNGFLLFLIFF, VFLANTSITQLGYCICFLLTV, IFTTMLHFAVNSFLSIMLSMV, SGAFAMCILAYMIPLSMVVSI, LWVACCVSILCIPIYSVMFWC, ALTVQSLIPVFTLFPASLIFL, and FGYIIISLLSLSPTIDPLVTI.

Belongs to the nematode receptor-like protein srd family.

The protein resides in the membrane. The chain is Serpentine receptor class delta-32 (srd-32) from Caenorhabditis elegans.